Consider the following 31-residue polypeptide: Photosystem I reaction center subunit XII (31 aa).

The chain crosses the membrane as a helical span at residues 7 to 26; the sequence is QVFLALIIALIPGILADRLG.

This sequence belongs to the PsaM family.

The protein localises to the plastid. It localises to the chloroplast thylakoid membrane. In Euglena deses, this protein is Photosystem I reaction center subunit XII.